The following is a 644-amino-acid chain: Polyglycine hydrolase (644 aa).

The N-terminal stretch at 1 to 23 (MYTSRSLFSTLASCLSLATLVAS) is a signal peptide. Asn100, Asn144, Asn159, Asn244, and Asn340 each carry an N-linked (GlcNAc...) asparagine glycan. Cys149 and Cys183 are joined by a disulfide. The active site involves Ser369. N-linked (GlcNAc...) asparagine glycans are attached at residues Asn389, Asn410, Asn443, and Asn486.

Belongs to the peptidase S12 family.

Its subcellular location is the secreted. The catalysed reaction is a glycyl-glycyl-[protein] + H2O = N-terminal glycyl-[protein] + [protein]-C-terminal glycine. Its activity is regulated as follows. Not inhibited by phenylmethylsulfonyl fluoride (PMSF; serine peptidase class S1 inhibitor), clavulanic acid (beta-lactamase inhibitor) or ampicillin (penicillin-binding protein (PBP) inhibitor). Serine-type endopeptidase that cleaves Gly-Gly bonds in the polyglycine linker of host plant class IV chitinases to disrupt their chitin-binding, and thereby plays a role in lowering the defense responses of the host to the fungus. Degrades Z.mays Endochitinase A (CHIA). Has low proteolytic activity on Z.mays Endochitinase B (CHIB). The chain is Polyglycine hydrolase from Cochliobolus carbonum (strain 26-R-13) (Maize leaf spot fungus).